A 560-amino-acid polypeptide reads, in one-letter code: Poly(3-hydroxyalkanoate) polymerase 2 (560 aa).

Residue cysteine 296 is part of the active site.

Belongs to the PHA/PHB synthase family. Type II PhaC subfamily.

It functions in the pathway biopolymer metabolism; poly-(R)-3-hydroxybutanoate biosynthesis. In terms of biological role, synthesizes poly(3-hydroxyalkanoates) (PHA), complements a mutant of P.putida that does not make PHA. This chain is Poly(3-hydroxyalkanoate) polymerase 2, found in Ectopseudomonas oleovorans (Pseudomonas oleovorans).